The sequence spans 288 residues: Bifunctional protein FolD (288 aa).

NADP(+) contacts are provided by residues 166–168 and I232; that span reads GAS.

This sequence belongs to the tetrahydrofolate dehydrogenase/cyclohydrolase family. Homodimer.

The enzyme catalyses (6R)-5,10-methylene-5,6,7,8-tetrahydrofolate + NADP(+) = (6R)-5,10-methenyltetrahydrofolate + NADPH. It carries out the reaction (6R)-5,10-methenyltetrahydrofolate + H2O = (6R)-10-formyltetrahydrofolate + H(+). It participates in one-carbon metabolism; tetrahydrofolate interconversion. Its function is as follows. Catalyzes the oxidation of 5,10-methylenetetrahydrofolate to 5,10-methenyltetrahydrofolate and then the hydrolysis of 5,10-methenyltetrahydrofolate to 10-formyltetrahydrofolate. The polypeptide is Bifunctional protein FolD (Escherichia coli O8 (strain IAI1)).